A 29-amino-acid chain; its full sequence is uncharacterized protein (29 aa).

It is found in the plastid. The protein resides in the chloroplast. This is an uncharacterized protein from Trieres chinensis (Marine centric diatom).